The following is a 310-amino-acid chain: tRNA methyltransferase 10 homolog B (310 aa).

Residues 55 to 94 (RKQRNWERRLEVKKSKRKEEKLRKKLNRQDKDVSDAQLSK) are a coiled coil. The SAM-dependent MTase TRM10-type domain occupies 101–298 (TKERLEGARA…AGIPPGKGFV (198 aa)).

This sequence belongs to the class IV-like SAM-binding methyltransferase superfamily. TRM10 family.

The catalysed reaction is guanosine(9) in tRNA + S-adenosyl-L-methionine = N(1)-methylguanosine(9) in tRNA + S-adenosyl-L-homocysteine + H(+). Its function is as follows. S-adenosyl-L-methionine-dependent guanine N(1)-methyltransferase that catalyzes the formation of N(1)-methylguanine at position 9 (m1G9) in tRNAs. Probably not able to catalyze formation of N(1)-methyladenine at position 9 (m1A9) in tRNAs. In Danio rerio (Zebrafish), this protein is tRNA methyltransferase 10 homolog B (trmt10b).